The chain runs to 505 residues: Apolipoprotein N-acyltransferase (505 aa).

The next 6 helical transmembrane spans lie at 26–46 (FAPY…LILL), 66–86 (FATG…MPLI), 89–109 (LFLM…FAWL), 129–149 (LWLI…WLWL), 161–181 (FAPI…AGAL), and 186–206 (IHKQ…GFGI). Positions 225 to 471 (IQGNVDQNLK…TAVLRAELTP (247 aa)) constitute a CN hydrolase domain. E264 (proton acceptor) is an active-site residue. The active site involves K330. C382 (nucleophile) is an active-site residue. Residues 481-501 (FGTWPLYFWVALSLMLAWWLP) traverse the membrane as a helical segment.

Belongs to the CN hydrolase family. Apolipoprotein N-acyltransferase subfamily.

It is found in the cell inner membrane. It catalyses the reaction N-terminal S-1,2-diacyl-sn-glyceryl-L-cysteinyl-[lipoprotein] + a glycerophospholipid = N-acyl-S-1,2-diacyl-sn-glyceryl-L-cysteinyl-[lipoprotein] + a 2-acyl-sn-glycero-3-phospholipid + H(+). It functions in the pathway protein modification; lipoprotein biosynthesis (N-acyl transfer). Catalyzes the phospholipid dependent N-acylation of the N-terminal cysteine of apolipoprotein, the last step in lipoprotein maturation. The protein is Apolipoprotein N-acyltransferase of Vibrio parahaemolyticus serotype O3:K6 (strain RIMD 2210633).